The sequence spans 638 residues: Chaperone protein DnaK (638 aa).

T198 is subject to Phosphothreonine; by autocatalysis. 2 disordered regions span residues 539-559 (DGLA…LASD) and 602-638 (QAKA…DDKK). The span at 611–623 (GQAHDAGQEKPAD) shows a compositional bias: basic and acidic residues. Over residues 624 to 638 (DVVDAEFEEVKDDKK) the composition is skewed to acidic residues.

The protein belongs to the heat shock protein 70 family.

In terms of biological role, acts as a chaperone. This is Chaperone protein DnaK from Shewanella frigidimarina (strain NCIMB 400).